The primary structure comprises 273 residues: NH(3)-dependent NAD(+) synthetase (273 aa).

Residue 46–53 participates in ATP binding; that stretch reads GISGGQDS. Mg(2+) is bound at residue Asp-52. Arg-139 is a deamido-NAD(+) binding site. Thr-159 contacts ATP. A Mg(2+)-binding site is contributed by Glu-164. Deamido-NAD(+) contacts are provided by Lys-172 and Asp-179. The ATP site is built by Lys-188 and Thr-210. 259–260 lines the deamido-NAD(+) pocket; it reads HK.

It belongs to the NAD synthetase family. In terms of assembly, homodimer.

It carries out the reaction deamido-NAD(+) + NH4(+) + ATP = AMP + diphosphate + NAD(+) + H(+). It participates in cofactor biosynthesis; NAD(+) biosynthesis; NAD(+) from deamido-NAD(+) (ammonia route): step 1/1. Functionally, catalyzes the ATP-dependent amidation of deamido-NAD to form NAD. Uses ammonia as a nitrogen source. The sequence is that of NH(3)-dependent NAD(+) synthetase from Mycobacteroides abscessus (strain ATCC 19977 / DSM 44196 / CCUG 20993 / CIP 104536 / JCM 13569 / NCTC 13031 / TMC 1543 / L948) (Mycobacterium abscessus).